Consider the following 119-residue polypeptide: Short coiled-coil protein A (119 aa).

Residues 1 to 10 show a composition bias toward acidic residues; it reads MEGDVDEDDG. Residues 1–26 form a disordered region; it reads MEGDVDEDDGTFTNISLADDSADGEP. The stretch at 48 to 95 forms a coiled coil; it reads MENQVEQEEKTRLINQVLELQHTLEDLSARVDAVKEENLKLKSENQVL.

Belongs to the SCOC family.

Its subcellular location is the golgi apparatus membrane. It localises to the golgi apparatus. The protein localises to the trans-Golgi network. The protein resides in the cytoplasm. It is found in the cytosol. Positive regulator of amino acid starvation-induced autophagy. The polypeptide is Short coiled-coil protein A (scoca) (Danio rerio (Zebrafish)).